Consider the following 176-residue polypeptide: Interleukin-19 (176 aa).

An N-terminal signal peptide occupies residues 1–24 (MKTQCASTWLLGMTLILCSVHIYS). 3 disulfides stabilise this stretch: C28/C120, C74/C126, and C75/C128. N-linked (GlcNAc...) asparagine glycosylation is present at N56. N-linked (GlcNAc...) asparagine glycans are attached at residues N127 and N134.

It belongs to the IL-10 family.

It is found in the secreted. Functionally, cytokine that functions as an anti-inflammatory and proangiogenic factor. Polarizes adaptive immunity to an anti-inflammatory phenotype through induction of T-helper 2 responses by both down-regulation of IFN-gamma and up-regulation of IL4 and IL5. Produced by osteocytes, stimulates granulopoiesis and neutrophil formation. Exerts its biological effect through a receptor complex consisting of a heterodimer of IL20RA and IL20RB. In turn, activates the Janus kinase (JAK) and signal transducer and activator of transcription (STAT) pathway, and importantly, STAT3. The protein is Interleukin-19 (Il19) of Mus musculus (Mouse).